Here is a 101-residue protein sequence, read N- to C-terminus: Urease subunit beta (101 aa).

The protein belongs to the urease beta subunit family. In terms of assembly, heterotrimer of UreA (gamma), UreB (beta) and UreC (alpha) subunits. Three heterotrimers associate to form the active enzyme.

Its subcellular location is the cytoplasm. It carries out the reaction urea + 2 H2O + H(+) = hydrogencarbonate + 2 NH4(+). The protein operates within nitrogen metabolism; urea degradation; CO(2) and NH(3) from urea (urease route): step 1/1. This is Urease subunit beta from Ruegeria pomeroyi (strain ATCC 700808 / DSM 15171 / DSS-3) (Silicibacter pomeroyi).